Here is a 391-residue protein sequence, read N- to C-terminus: Cyclin-B1-2 (391 aa).

This sequence belongs to the cyclin family. Cyclin AB subfamily.

This is Cyclin-B1-2 (CYCB1-2) from Oryza sativa subsp. japonica (Rice).